We begin with the raw amino-acid sequence, 257 residues long: Uroplakin-1a (257 aa).

Over 1 to 13 (MASAATEGEKGSP) the chain is Cytoplasmic. A helical transmembrane segment spans residues 14 to 34 (VVVGLLVVGNIIILLSGLALF). Topologically, residues 35-58 (AETVWVTADQYRVYPLMGVSGKDD) are extracellular. Residues 59–85 (VFAGAWIAIFCGFSFFVVASFGVGAAL) form a helical membrane-spanning segment. The Cytoplasmic segment spans residues 86–90 (CRRRY). The helical transmembrane segment at 91 to 111 (MILTYLLLMLIVYIFECASCI) threads the bilayer. The Extracellular portion of the chain corresponds to 112–229 (TSYTHRDYMV…HIGHAIDSYT (118 aa)). Residue N169 is glycosylated (N-linked (GlcNAc...) asparagine). The chain crosses the membrane as a helical span at residues 230-251 (WGISWFGFAILMWTLPVMLIAM). The Cytoplasmic segment spans residues 252–257 (YFYTTL).

It belongs to the tetraspanin (TM4SF) family. As to quaternary structure, homodimer; disulfide-linked. Interacts with uroplakin-2 (UPK2). Binds to uropathogenic E.coli fimH.

The protein localises to the membrane. In terms of biological role, component of the asymmetric unit membrane (AUM); a highly specialized biomembrane elaborated by terminally differentiated urothelial cells. May play an important role in normal bladder epithelial physiology, possibly in regulating membrane permeability of superficial umbrella cells or in stabilizing the apical membrane through AUM/cytoskeletal interactions. The chain is Uroplakin-1a (Upk1a) from Mus musculus (Mouse).